The chain runs to 826 residues: E3 ubiquitin ligase PARAQUAT TOLERANCE 3 (826 aa).

Residues 3 to 76 form the DWNN domain; it reads IYYKFKSARD…NTSVLIRRVP (74 aa). The CCHC-type zinc-finger motif lies at 203-216; it reads CHRCNVSGHFIQHC. The residue at position 278 (S278) is a Phosphoserine. The segment at 288-326 adopts an RING-type; degenerate zinc-finger fold; the sequence is CPLCKEVMRDAALASKCCLKSYCDKCIRDHIIAKSMCVC. Composition is skewed to polar residues over residues 356–365, 396–406, and 435–454; these read SAENAGSMCQ, PSNNNETSTLK, and NIQG…NTQP. Disordered stretches follow at residues 356-406, 435-488, and 585-826; these read SAEN…STLK, NIQG…GPDY, and HPIM…RARA. Position 397 is a phosphoserine (S397). Over residues 588–624 the composition is skewed to basic and acidic residues; sequence MGREEFEAKKTEMKRKRENEIRRSEGGNVVRDSEKSR. Over residues 625 to 635 the composition is skewed to polar residues; that stretch reads IMNNSAVTSSP. Residues 651–667 are compositionally biased toward basic and acidic residues; the sequence is DYDRRRRSDRSSPERQS. 2 consecutive short sequence motifs (nuclear localization signal) follow at residues 668–675 and 695–702; these read SRRFTSPP and DRRRDRPR. A compositionally biased stretch (basic and acidic residues) spans 680 to 706; that stretch reads RKSERDRHHDLDSEHDRRRDRPRETDR. Basic residues predominate over residues 790-799; that stretch reads FKRKPSRYKR. S800 is modified (phosphoserine). Residues 809–826 are compositionally biased toward basic and acidic residues; the sequence is GDEHFRHSKRSKGERARA.

Interacts with PRMT13/PRMT4B in the nucleus. In terms of tissue distribution, expressed constitutively in both shoot and root tissues.

It localises to the nucleus. It catalyses the reaction S-ubiquitinyl-[E2 ubiquitin-conjugating enzyme]-L-cysteine + [acceptor protein]-L-lysine = [E2 ubiquitin-conjugating enzyme]-L-cysteine + N(6)-ubiquitinyl-[acceptor protein]-L-lysine.. Its function is as follows. E3 ubiquitin ligase acting as a negative regulator of oxidative stress tolerance, probably by mediating 26S proteasome-mediated degradation of PRMT13/PRMT4B, thus preventing APX1 and GPX1 accumulation via the reduction of histone H3 methylation (H3R17me2a). Confers sensitivity to cadmium CdCl(2) and salt NaCl stresses. This chain is E3 ubiquitin ligase PARAQUAT TOLERANCE 3, found in Arabidopsis thaliana (Mouse-ear cress).